We begin with the raw amino-acid sequence, 267 residues long: Hydroxypyruvate/pyruvate aldolase Bphyt_5830 (267 aa).

Catalysis depends on His48, which acts as the Proton acceptor. Residues Glu152 and Asp178 each contribute to the a divalent metal cation site.

This sequence belongs to the HpcH/HpaI aldolase family. A divalent metal cation serves as cofactor.

It catalyses the reaction D-glyceraldehyde + 3-hydroxypyruvate = 2-dehydro-D-galactonate. It carries out the reaction D-glyceraldehyde + 3-hydroxypyruvate = (3R,4S,5R)-3,4,5,6-tetrahydroxy-2-oxohexanoate. The catalysed reaction is D-glyceraldehyde + pyruvate = 2-dehydro-3-deoxy-L-galactonate. Its function is as follows. Aldolase which can catalyze in vitro the aldolisation reaction between hydroxypyruvate (HPA) or pyruvate (PA) and D-glyceraldehyde (D-GA). The condensation of hydroxypyruvate and D-glyceraldehyde produces 2-dehydro-D-galactonate as the major product and (3R,4S,5R)-3,4,5,6-tetrahydroxy-2-oxohexanoate. The condensation of pyruvate and D-glyceraldehyde produces 2-dehydro-3-deoxy-L-galactonate. In Paraburkholderia phytofirmans (strain DSM 17436 / LMG 22146 / PsJN) (Burkholderia phytofirmans), this protein is Hydroxypyruvate/pyruvate aldolase Bphyt_5830.